The chain runs to 201 residues: Retinol-binding protein 4 (201 aa).

The N-terminal stretch at 1-18 is a signal peptide; sequence MEWVWALVLLAALGGGSA. 3 cysteine pairs are disulfide-bonded: C22–C178, C88–C192, and C138–C147. Q116 contacts substrate. R139 is modified (omega-N-methylarginine).

It belongs to the calycin superfamily. Lipocalin family. As to quaternary structure, interacts with TTR. Interaction with TTR prevents its loss by filtration through the kidney glomeruli. Interacts with STRA6. In terms of tissue distribution, detected in blood plasma (at protein level).

Its subcellular location is the secreted. In terms of biological role, retinol-binding protein that mediates retinol transport in blood plasma. Delivers retinol from the liver stores to the peripheral tissues. Transfers the bound all-trans retinol to STRA6, that then facilitates retinol transport across the cell membrane. In Rattus norvegicus (Rat), this protein is Retinol-binding protein 4 (Rbp4).